The sequence spans 348 residues: Ferredoxin--NADP reductase 1 (348 aa).

Residues glutamate 36, lysine 44, tyrosine 48, isoleucine 88, proline 123, aspartate 285, and serine 326 each contribute to the FAD site. The disordered stretch occupies residues 329 to 348 (EKFKKKNEQLKQEKQAQLMN).

Belongs to the ferredoxin--NADP reductase type 2 family. Homodimer. It depends on FAD as a cofactor.

It carries out the reaction 2 reduced [2Fe-2S]-[ferredoxin] + NADP(+) + H(+) = 2 oxidized [2Fe-2S]-[ferredoxin] + NADPH. The sequence is that of Ferredoxin--NADP reductase 1 from Shouchella clausii (strain KSM-K16) (Alkalihalobacillus clausii).